Here is a 321-residue protein sequence, read N- to C-terminus: Malate dehydrogenase (321 aa).

NAD(+) contacts are provided by residues Gly10 to Gly15 and Asp34. Substrate-binding residues include Arg83 and Arg89. NAD(+)-binding positions include Asn96 and Ile119 to Asn121. The substrate site is built by Asn121 and Arg152. The active-site Proton acceptor is the His176.

The protein belongs to the LDH/MDH superfamily. MDH type 3 family.

The catalysed reaction is (S)-malate + NAD(+) = oxaloacetate + NADH + H(+). Its function is as follows. Catalyzes the reversible oxidation of malate to oxaloacetate. In Xanthobacter autotrophicus (strain ATCC BAA-1158 / Py2), this protein is Malate dehydrogenase.